A 219-amino-acid polypeptide reads, in one-letter code: Small ribosomal subunit protein uS3c (219 aa).

The KH type-2 domain maps to 47-118 (IKKNIRISSG…KINIAITRIT (72 aa)).

It belongs to the universal ribosomal protein uS3 family. Part of the 30S ribosomal subunit.

The protein resides in the plastid. Its subcellular location is the chloroplast. This chain is Small ribosomal subunit protein uS3c (rps3), found in Citrus sinensis (Sweet orange).